The following is a 134-amino-acid chain: UPF0756 membrane protein YeaL (134 aa).

Helical transmembrane passes span 14–34 (ALGFISHNTTVAVSILVLIIV), 51–71 (LTVGIIILTIGVMAPIASGTL), 86–106 (LVAIAVGVFVSWLGGRGITLM), and 110–130 (PQLVAGLLVGTVLGVALFRGV).

It belongs to the UPF0756 family.

Its subcellular location is the cell membrane. The polypeptide is UPF0756 membrane protein YeaL (Salmonella typhimurium (strain LT2 / SGSC1412 / ATCC 700720)).